The primary structure comprises 195 residues: dTTP/UTP pyrophosphatase (195 aa).

Asp-70 acts as the Proton acceptor in catalysis.

Belongs to the Maf family. YhdE subfamily. A divalent metal cation serves as cofactor.

It localises to the cytoplasm. It catalyses the reaction dTTP + H2O = dTMP + diphosphate + H(+). It carries out the reaction UTP + H2O = UMP + diphosphate + H(+). In terms of biological role, nucleoside triphosphate pyrophosphatase that hydrolyzes dTTP and UTP. May have a dual role in cell division arrest and in preventing the incorporation of modified nucleotides into cellular nucleic acids. The polypeptide is dTTP/UTP pyrophosphatase (Photorhabdus laumondii subsp. laumondii (strain DSM 15139 / CIP 105565 / TT01) (Photorhabdus luminescens subsp. laumondii)).